Here is a 446-residue protein sequence, read N- to C-terminus: Chromosomal replication initiator protein DnaA (446 aa).

The tract at residues 1-72 (MENILDLWNQ…ADTIYELTGE (72 aa)) is domain I, interacts with DnaA modulators. Positions 72–109 (EELSVKFVIPQNQDEENFLPKPQVKKAAKEEPSDFPQS) are domain II. Residues 110–326 (MLNPKYTFDT…GALIRVVAYS (217 aa)) are domain III, AAA+ region. The ATP site is built by Gly-154, Gly-156, Lys-157, and Thr-158. Residues 327-446 (SLINKDINAD…QVKEIKELLK (120 aa)) are domain IV, binds dsDNA.

This sequence belongs to the DnaA family. In terms of assembly, oligomerizes as a right-handed, spiral filament on DNA at oriC.

The protein resides in the cytoplasm. In terms of biological role, plays an essential role in the initiation and regulation of chromosomal replication. ATP-DnaA binds to the origin of replication (oriC) to initiate formation of the DNA replication initiation complex once per cell cycle. Binds the DnaA box (a 9 base pair repeat at the origin) and separates the double-stranded (ds)DNA. Forms a right-handed helical filament on oriC DNA; dsDNA binds to the exterior of the filament while single-stranded (ss)DNA is stabiized in the filament's interior. The ATP-DnaA-oriC complex binds and stabilizes one strand of the AT-rich DNA unwinding element (DUE), permitting loading of DNA polymerase. After initiation quickly degrades to an ADP-DnaA complex that is not apt for DNA replication. Binds acidic phospholipids. The sequence is that of Chromosomal replication initiator protein DnaA from Bacillus velezensis (strain DSM 23117 / BGSC 10A6 / LMG 26770 / FZB42) (Bacillus amyloliquefaciens subsp. plantarum).